Here is a 420-residue protein sequence, read N- to C-terminus: Anaerobic glycerol-3-phosphate dehydrogenase subunit B (420 aa).

The protein belongs to the anaerobic G-3-P dehydrogenase subunit B family. In terms of assembly, composed of a catalytic GlpA/B dimer and of membrane bound GlpC. It depends on FMN as a cofactor.

It catalyses the reaction a quinone + sn-glycerol 3-phosphate = dihydroxyacetone phosphate + a quinol. Its pathway is polyol metabolism; glycerol degradation via glycerol kinase pathway; glycerone phosphate from sn-glycerol 3-phosphate (anaerobic route): step 1/1. In terms of biological role, conversion of glycerol 3-phosphate to dihydroxyacetone. Uses fumarate or nitrate as electron acceptor. The protein is Anaerobic glycerol-3-phosphate dehydrogenase subunit B of Pectobacterium atrosepticum (strain SCRI 1043 / ATCC BAA-672) (Erwinia carotovora subsp. atroseptica).